The following is a 225-amino-acid chain: Small ribosomal subunit protein uS3 (225 aa).

Residues 38–106 (LRGHLRKKLS…DVALNIVEIR (69 aa)) form the KH type-2 domain.

This sequence belongs to the universal ribosomal protein uS3 family. In terms of assembly, part of the 30S ribosomal subunit. Forms a tight complex with proteins S10 and S14.

Binds the lower part of the 30S subunit head. Binds mRNA in the 70S ribosome, positioning it for translation. This is Small ribosomal subunit protein uS3 from Granulibacter bethesdensis (strain ATCC BAA-1260 / CGDNIH1).